The primary structure comprises 406 residues: S-adenosylmethionine synthase (406 aa).

140–145 (GRGSVD) provides a ligand contact to ATP.

Belongs to the AdoMet synthase 2 family. Requires Mg(2+) as cofactor.

The enzyme catalyses L-methionine + ATP + H2O = S-adenosyl-L-methionine + phosphate + diphosphate. It functions in the pathway amino-acid biosynthesis; S-adenosyl-L-methionine biosynthesis; S-adenosyl-L-methionine from L-methionine: step 1/1. Catalyzes the formation of S-adenosylmethionine from methionine and ATP. The protein is S-adenosylmethionine synthase (mat) of Aeropyrum pernix (strain ATCC 700893 / DSM 11879 / JCM 9820 / NBRC 100138 / K1).